The primary structure comprises 130 residues: Small ribosomal subunit protein uS8 (130 aa).

Belongs to the universal ribosomal protein uS8 family. As to quaternary structure, part of the 30S ribosomal subunit. Contacts proteins S5 and S12.

In terms of biological role, one of the primary rRNA binding proteins, it binds directly to 16S rRNA central domain where it helps coordinate assembly of the platform of the 30S subunit. The chain is Small ribosomal subunit protein uS8 from Shewanella piezotolerans (strain WP3 / JCM 13877).